We begin with the raw amino-acid sequence, 526 residues long: Cytochrome P450 52A5 (526 aa).

A helical transmembrane segment spans residues 18 to 38 (WYVIVPLAIIIYKVFDYFYVL). Cys473 contacts heme.

Belongs to the cytochrome P450 family. It depends on heme as a cofactor.

It localises to the membrane. In terms of biological role, together with an NADPH cytochrome P450 the enzyme system catalyzes the terminal hydroxylation as the first step in the assimilation of alkanes and fatty acids. The protein is Cytochrome P450 52A5 (CYP52A5) of Candida maltosa (Yeast).